The primary structure comprises 306 residues: Recombination-associated protein RdgC (306 aa).

It belongs to the RdgC family.

The protein localises to the cytoplasm. Its subcellular location is the nucleoid. In terms of biological role, may be involved in recombination. The polypeptide is Recombination-associated protein RdgC (Pseudomonas entomophila (strain L48)).